Consider the following 279-residue polypeptide: Pantothenate synthetase (279 aa).

26–33 (MGNLHDGH) contacts ATP. Catalysis depends on His33, which acts as the Proton donor. Gln57 lines the (R)-pantoate pocket. Gln57 contributes to the beta-alanine binding site. An ATP-binding site is contributed by 144–147 (GKKD). Gln150 provides a ligand contact to (R)-pantoate. Residues Val173 and 181–184 (LSSR) each bind ATP.

This sequence belongs to the pantothenate synthetase family. As to quaternary structure, homodimer.

The protein localises to the cytoplasm. It catalyses the reaction (R)-pantoate + beta-alanine + ATP = (R)-pantothenate + AMP + diphosphate + H(+). It functions in the pathway cofactor biosynthesis; (R)-pantothenate biosynthesis; (R)-pantothenate from (R)-pantoate and beta-alanine: step 1/1. Its function is as follows. Catalyzes the condensation of pantoate with beta-alanine in an ATP-dependent reaction via a pantoyl-adenylate intermediate. This is Pantothenate synthetase from Burkholderia mallei (strain NCTC 10229).